Here is a 402-residue protein sequence, read N- to C-terminus: Formate-dependent phosphoribosylglycinamide formyltransferase (402 aa).

Residues 22 to 23 and glutamate 82 contribute to the N(1)-(5-phospho-beta-D-ribosyl)glycinamide site; that span reads EL. ATP-binding positions include arginine 115, lysine 160, 165–170, 200–203, and glutamate 208; these read SSGKGQ and EGFV. The 199-residue stretch at 120-318 folds into the ATP-grasp domain; that stretch reads RLAAETLGLP…EFELHARAIL (199 aa). 2 residues coordinate Mg(2+): glutamate 277 and glutamate 289. N(1)-(5-phospho-beta-D-ribosyl)glycinamide is bound by residues aspartate 296, lysine 365, and 372–373; that span reads RR.

The protein belongs to the PurK/PurT family. As to quaternary structure, homodimer.

The catalysed reaction is N(1)-(5-phospho-beta-D-ribosyl)glycinamide + formate + ATP = N(2)-formyl-N(1)-(5-phospho-beta-D-ribosyl)glycinamide + ADP + phosphate + H(+). The protein operates within purine metabolism; IMP biosynthesis via de novo pathway; N(2)-formyl-N(1)-(5-phospho-D-ribosyl)glycinamide from N(1)-(5-phospho-D-ribosyl)glycinamide (formate route): step 1/1. Its function is as follows. Involved in the de novo purine biosynthesis. Catalyzes the transfer of formate to 5-phospho-ribosyl-glycinamide (GAR), producing 5-phospho-ribosyl-N-formylglycinamide (FGAR). Formate is provided by PurU via hydrolysis of 10-formyl-tetrahydrofolate. This Mycobacteroides abscessus (strain ATCC 19977 / DSM 44196 / CCUG 20993 / CIP 104536 / JCM 13569 / NCTC 13031 / TMC 1543 / L948) (Mycobacterium abscessus) protein is Formate-dependent phosphoribosylglycinamide formyltransferase.